A 374-amino-acid chain; its full sequence is Ribosomal RNA large subunit methyltransferase G (374 aa).

This sequence belongs to the methyltransferase superfamily. RlmG family.

It is found in the cytoplasm. It carries out the reaction guanosine(1835) in 23S rRNA + S-adenosyl-L-methionine = N(2)-methylguanosine(1835) in 23S rRNA + S-adenosyl-L-homocysteine + H(+). Its function is as follows. Specifically methylates the guanine in position 1835 (m2G1835) of 23S rRNA. This is Ribosomal RNA large subunit methyltransferase G from Pseudomonas savastanoi pv. phaseolicola (strain 1448A / Race 6) (Pseudomonas syringae pv. phaseolicola (strain 1448A / Race 6)).